The chain runs to 853 residues: MAVTSHHMIPVMVVLMSACLATAGPEPSTRCELSPINASHPVQALMESFTVLSGCASRGTTGLPREVHVLNLRSTDQGPGQRQREVTLHLNPIASVHTHHKPIVFLLNSPQPLVWHLKTERLAAGVPRLFLVSEGSVVQFPSGNFSLTAETEERNFPQENEHLLRWAQKEYGAVTSFTELKIARNIYIKVGEDQVFPPTCNIGKNFLSLNYLAEYLQPKAAEGCVLPSQPHEKEVHIIELITPSSNPYSAFQVDIIVDIRPAQEDPEVVKNLVLILKCKKSVNWVIKSFDVKGNLKVIAPNSIGFGKESERSMTMTKLVRDDIPSTQENLMKWALDNGYRPVTSYTMAPVANRFHLRLENNEEMRDEEVHTIPPELRILLDPDHPPALDNPLFPGEGSPNGGLPFPFPDIPRRGWKEGEDRIPRPKQPIVPSVQLLPDHREPEEVQGGVDIALSVKCDHEKMVVAVDKDSFQTNGYSGMELTLLDPSCKAKMNGTHFVLESPLNGCGTRHRRSTPDGVVYYNSIVVQAPSPGDSSGWPDGYEDLESGDNGFPGDGDEGETAPLSRAGVVVFNCSLRQLRNPSGFQGQLDGNATFNMELYNTDLFLVPSPGVFSVAENEHVYVEVSVTKADQDLGFAIQTCFLSPYSNPDRMSDYTIIENICPKDDSVKFYSSKRVHFPIPHAEVDKKRFSFLFKSVFNTSLLFLHCELTLCSRKKGSLKLPRCVTPDDACTSLDATMIWTMMQNKKTFTKPLAVVLQVDYKENVPSTKDSSPIPPPPPQIFHGLDTLTVMGIAFAAFVIGALLTGALWYIYSHTGETARRQQVPTSPPASENSSAAHSIGSTQSTPCSSSSTA.

The signal sequence occupies residues 1–23 (MAVTSHHMIPVMVVLMSACLATA). Topologically, residues 24–789 (GPEPSTRCEL…IFHGLDTLTV (766 aa)) are extracellular. 3 N-linked (GlcNAc...) asparagine glycosylation sites follow: Asn-37, Asn-144, and Asn-493. Residues Cys-55 and Cys-200 are joined by a disulfide bond. The region spanning 456–730 (KCDHEKMVVA…PRCVTPDDAC (275 aa)) is the ZP domain. Residues 530 to 559 (SPGDSSGWPDGYEDLESGDNGFPGDGDEGE) form a disordered region. Ser-535 and Ser-546 each carry an O-linked (Xyl...) (glycosaminoglycan) serine glycan. Asn-572, Asn-591, and Asn-698 each carry an N-linked (GlcNAc...) asparagine glycan. Disulfide bonds link Cys-640–Cys-706, Cys-661–Cys-730, and Cys-711–Cys-723. An interaction with TGF-beta ligand region spans residues 737-751 (MIWTMMQNKKTFTKP). A helical membrane pass occupies residues 790–811 (MGIAFAAFVIGALLTGALWYIY). Residues 812–853 (SHTGETARRQQVPTSPPASENSSAAHSIGSTQSTPCSSSSTA) are Cytoplasmic-facing. The span at 820-836 (RQQVPTSPPASENSSAA) shows a compositional bias: polar residues. Positions 820-853 (RQQVPTSPPASENSSAAHSIGSTQSTPCSSSSTA) are disordered. Positions 838 to 853 (SIGSTQSTPCSSSSTA) are enriched in low complexity. Thr-842 bears the Phosphothreonine mark.

In terms of assembly, forms homodimers and homooligomers. Interacts with DYNLT4. Interacts with integrin ITGA5:ITGB1; this interaction promotes the internalization and trafficking of ITGA5:ITGB1 into endocytic vesicles. Interacts with TGFB1, BMP2, BMP5, BMP7 or GDF5 and inhibin A via the ligand binding domains. Interacts with ALK3/BMPR1A; this interaction results in the cell surface retention of BMPR1A. Interacts with ALK6/BMPR1B; this interaction enhances BMPR1B-mediated stimulation of the BMP signaling pathway. Interacts with the scaffolding protein beta-arrestin2/ARRB2; this interaction mediates internalization of TGFBR3 and thus regulates migration, actin cytoskeleton and activation of CDC42. Post-translationally, extensively modified by glycosaminoglycan groups (GAG). Phosphorylated in the cytoplasmic domain by the type II receptor TGFBR2 at THR-842 to mediate recruitment of ARRB2 and subsequent internalization of TGFBR2 and TGFBR3.

It is found in the cell membrane. The protein localises to the secreted. The protein resides in the extracellular space. Its subcellular location is the extracellular matrix. Its function is as follows. Cell surface receptor that regulates diverse cellular processes including cell proliferation, differentiation, migration, and apoptosis. Initiates BMP, inhibin, and TGF-beta signaling pathways by interacting with different ligands including TGFB1, BMP2, BMP5, BMP7 or GDF5. Alternatively, acts as a cell surface coreceptor for BMP ligands, serving to enhance ligand binding by differentially regulating BMPR1A/ALK3 and BMPR1B/ALK6 receptor trafficking. Promotes epithelial cell adhesion, focal adhesion formation and integrin signaling during epithelial cell spreading on fibronectin. By interacting with the scaffolding protein beta-arrestin2/ARRB2, regulates migration or actin cytoskeleton and promotes the activation of CDC42 as well as the inhibition of NF-kappa-B. In gonadotrope cells, acts as an inhibin A coreceptor and regulates follicle-stimulating hormone (FSH) levels and female fertility. Plays a role in the inhibition of directed and random cell migration in epithelial cells by altering the actin cytoskeletal organization. Participates in epithelial-mesenchymal transformation (EMT) upon binding to BMP2 or TGFB2, by activating the PAR6/SMURF1/RHOA pathway. The sequence is that of Transforming growth factor beta receptor type 3 (Tgfbr3) from Rattus norvegicus (Rat).